Consider the following 311-residue polypeptide: Phosphopantothenate--cysteine ligase (311 aa).

Residue Ala2 is modified to N-acetylalanine.

This sequence belongs to the PPC synthetase family. In terms of assembly, homodimer.

The enzyme catalyses (R)-4'-phosphopantothenate + L-cysteine + ATP = N-[(R)-4-phosphopantothenoyl]-L-cysteine + AMP + diphosphate + H(+). It carries out the reaction (R)-4'-phosphopantothenate + L-cysteine + CTP = N-[(R)-4-phosphopantothenoyl]-L-cysteine + CMP + diphosphate + H(+). It functions in the pathway cofactor biosynthesis; coenzyme A biosynthesis; CoA from (R)-pantothenate: step 2/5. In terms of biological role, catalyzes the second step in the biosynthesis of coenzyme A from vitamin B5, where cysteine is conjugated to 4'-phosphopantothenate to form 4-phosphopantothenoylcysteine. Has a preference for ATP over CTP as a cosubstrate. This Mus musculus (Mouse) protein is Phosphopantothenate--cysteine ligase (Ppcs).